Consider the following 301-residue polypeptide: Probable alpha-L-glutamate ligase 2 (301 aa).

An ATP-grasp domain is found at 104–287 (LQLLSRKGIG…VTEPIVEYIE (184 aa)). Residues lysine 141, 178-179 (EY), aspartate 187, and 211-213 (RSN) each bind ATP. The Mg(2+) site is built by aspartate 248, glutamate 260, and asparagine 262. Positions 248, 260, and 262 each coordinate Mn(2+).

The protein belongs to the RimK family. Requires Mg(2+) as cofactor. Mn(2+) serves as cofactor.

The protein is Probable alpha-L-glutamate ligase 2 of Shewanella baltica (strain OS195).